Reading from the N-terminus, the 145-residue chain is 3-hydroxyacyl-[acyl-carrier-protein] dehydratase FabZ (145 aa).

H51 is a catalytic residue.

This sequence belongs to the thioester dehydratase family. FabZ subfamily.

The protein resides in the cytoplasm. The enzyme catalyses a (3R)-hydroxyacyl-[ACP] = a (2E)-enoyl-[ACP] + H2O. Involved in unsaturated fatty acids biosynthesis. Catalyzes the dehydration of short chain beta-hydroxyacyl-ACPs and long chain saturated and unsaturated beta-hydroxyacyl-ACPs. In Staphylococcus epidermidis (strain ATCC 35984 / DSM 28319 / BCRC 17069 / CCUG 31568 / BM 3577 / RP62A), this protein is 3-hydroxyacyl-[acyl-carrier-protein] dehydratase FabZ.